Consider the following 240-residue polypeptide: Putative outer membrane protein RT0057 (240 aa).

An N-terminal signal peptide occupies residues 1 to 20 (MLKKLCVILFISSITINSHA).

It belongs to the OmpW/AlkL family.

It localises to the cell outer membrane. The chain is Putative outer membrane protein RT0057 from Rickettsia typhi (strain ATCC VR-144 / Wilmington).